The primary structure comprises 130 residues: Hypocretin neuropeptide precursor (130 aa).

The N-terminal stretch at 1–32 is a signal peptide; the sequence is MNPPSTKVPWAAVTLLLLLLLPPALLSPGAAA. Gln-33 is subject to Pyrrolidone carboxylic acid. 2 cysteine pairs are disulfide-bonded: Cys-38/Cys-44 and Cys-39/Cys-46. Leu-65 carries the post-translational modification Leucine amide. The residue at position 96 (Met-96) is a Methionine amide. Positions 97-130 are cleaved as a propeptide — removed in mature form; the sequence is GRRAGAEPAPRPCPGRRCPVVAVPSAAPGGRSGV.

It belongs to the orexin family. Post-translationally, specific enzymatic cleavages at paired basic residues yield the different active peptides.

The protein resides in the rough endoplasmic reticulum. The protein localises to the cytoplasmic vesicle. It localises to the synapse. Neuropeptides that play a significant role in the regulation of food intake and sleep-wakefulness, possibly by coordinating the complex behavioral and physiologic responses of these complementary homeostatic functions. A broader role in the homeostatic regulation of energy metabolism, autonomic function, hormonal balance and the regulation of body fluids, is also suggested. Its function is as follows. Binds to orexin receptors HCRTR1/OX1R and HCRTR2/OX2R with a high affinity. Stimulates food intake. Modulates pituitary luteinizing hormone secretion in an ovarian steroid-dependent manner. Functionally, binds to orexin receptor HCRTR2/OX2R only. Stimulates food intake. Modulates pituitary luteinizing hormone secretion in an ovarian steroid-dependent manner. The polypeptide is Hypocretin neuropeptide precursor (HCRT) (Canis lupus familiaris (Dog)).